Consider the following 172-residue polypeptide: Adenine phosphoribosyltransferase (172 aa).

This sequence belongs to the purine/pyrimidine phosphoribosyltransferase family. As to quaternary structure, homodimer.

The protein resides in the cytoplasm. It carries out the reaction AMP + diphosphate = 5-phospho-alpha-D-ribose 1-diphosphate + adenine. Its pathway is purine metabolism; AMP biosynthesis via salvage pathway; AMP from adenine: step 1/1. Catalyzes a salvage reaction resulting in the formation of AMP, that is energically less costly than de novo synthesis. This Roseiflexus castenholzii (strain DSM 13941 / HLO8) protein is Adenine phosphoribosyltransferase.